A 442-amino-acid chain; its full sequence is Chaperone protein dnaJ A6, chloroplastic (442 aa).

The transit peptide at Met-1–Arg-82 directs the protein to the chloroplast. The 65-residue stretch at Asp-86 to Gly-150 folds into the J domain. The CR-type zinc-finger motif lies at Gly-211–Thr-292. The Zn(2+) site is built by Cys-224, Cys-227, Cys-241, Cys-244, Cys-267, Cys-270, Cys-280, and Cys-283. CXXCXGXG motif repeat units lie at residues Cys-224 to Gly-231, Cys-241 to Gly-248, Cys-267 to Gly-274, and Cys-280 to Gly-287.

This sequence belongs to the DnaJ family.

The protein localises to the plastid. It localises to the chloroplast. May function together with HSC70 chaperone to assist protein folding and prevent protein aggregation during heat stress in the chloroplast. This is Chaperone protein dnaJ A6, chloroplastic from Arabidopsis thaliana (Mouse-ear cress).